A 159-amino-acid polypeptide reads, in one-letter code: Large ribosomal subunit protein uL15 (159 aa).

Residues Met1 to Lys46 form a disordered region. The segment covering Asn22 to Ser34 has biased composition (gly residues).

Belongs to the universal ribosomal protein uL15 family. Part of the 50S ribosomal subunit.

In terms of biological role, binds to the 23S rRNA. The sequence is that of Large ribosomal subunit protein uL15 from Fusobacterium nucleatum subsp. nucleatum (strain ATCC 25586 / DSM 15643 / BCRC 10681 / CIP 101130 / JCM 8532 / KCTC 2640 / LMG 13131 / VPI 4355).